The chain runs to 356 residues: Trifolitoxin operon protein TfxC (356 aa).

This Rhizobium leguminosarum bv. trifolii protein is Trifolitoxin operon protein TfxC (tfxC).